Reading from the N-terminus, the 563-residue chain is Cysteine--tRNA ligase, chloroplastic/mitochondrial (563 aa).

Cys91 provides a ligand contact to Zn(2+). Residue Gly92 coordinates L-cysteine. Residues Val93–His103 carry the 'HIGH' region motif. Thr131 is a binding site for L-cysteine. A 'KIIK' region motif is present at residues Lys136–Ala139. Zn(2+)-binding residues include Cys271, His296, and Glu300. His296 is a binding site for L-cysteine. Positions Lys328–Ser332 match the 'KMSKS' region motif. Lys331 provides a ligand contact to ATP.

It belongs to the class-I aminoacyl-tRNA synthetase family. Zn(2+) is required as a cofactor.

The protein resides in the plastid. The protein localises to the chloroplast. It localises to the mitochondrion. The catalysed reaction is tRNA(Cys) + L-cysteine + ATP = L-cysteinyl-tRNA(Cys) + AMP + diphosphate. Required for female gametophyte development. Is necessary for the fusion of central cell nuclei and programmed cell death (PCD) of the antipodals. This chain is Cysteine--tRNA ligase, chloroplastic/mitochondrial, found in Arabidopsis thaliana (Mouse-ear cress).